A 279-amino-acid chain; its full sequence is Proteasome subunit beta 2 (279 aa).

Residues 1-53 (MAAAFDPSGRFPDLFTSVGTSSFSAFLSKAAPELLPGRRPLPPGMATGLTPHA) constitute a propeptide, removed in mature form; by autocatalysis. The active-site Nucleophile is T54.

Belongs to the peptidase T1B family. As to quaternary structure, the 20S proteasome core is composed of 14 alpha and 14 beta subunits that assemble into four stacked heptameric rings, resulting in a barrel-shaped structure. The two inner rings, each composed of seven catalytic beta subunits, are sandwiched by two outer rings, each composed of seven alpha subunits. The catalytic chamber with the active sites is on the inside of the barrel. Has a gated structure, the ends of the cylinder being occluded by the N-termini of the alpha-subunits. Is capped by the proteasome-associated ATPase, ARC.

The protein resides in the cytoplasm. The catalysed reaction is Cleavage of peptide bonds with very broad specificity.. Its pathway is protein degradation; proteasomal Pup-dependent pathway. Its activity is regulated as follows. The formation of the proteasomal ATPase ARC-20S proteasome complex, likely via the docking of the C-termini of ARC into the intersubunit pockets in the alpha-rings, may trigger opening of the gate for substrate entry. Interconversion between the open-gate and close-gate conformations leads to a dynamic regulation of the 20S proteasome proteolysis activity. Its function is as follows. Component of the proteasome core, a large protease complex with broad specificity involved in protein degradation. This chain is Proteasome subunit beta 2, found in Salinispora tropica (strain ATCC BAA-916 / DSM 44818 / JCM 13857 / NBRC 105044 / CNB-440).